The primary structure comprises 176 residues: Ribosome maturation factor RimM (176 aa).

In terms of domain architecture, PRC barrel spans 99 to 176; it reads EDEYYWSDLV…RMVVDWERDF (78 aa).

This sequence belongs to the RimM family. In terms of assembly, binds ribosomal protein uS19.

It is found in the cytoplasm. An accessory protein needed during the final step in the assembly of 30S ribosomal subunit, possibly for assembly of the head region. Essential for efficient processing of 16S rRNA. May be needed both before and after RbfA during the maturation of 16S rRNA. It has affinity for free ribosomal 30S subunits but not for 70S ribosomes. This is Ribosome maturation factor RimM from Psychrobacter sp. (strain PRwf-1).